Consider the following 238-residue polypeptide: Endonuclease V (238 aa).

Mg(2+) is bound by residues aspartate 46 and aspartate 116.

It belongs to the endonuclease V family. Requires Mg(2+) as cofactor.

It localises to the cytoplasm. The enzyme catalyses Endonucleolytic cleavage at apurinic or apyrimidinic sites to products with a 5'-phosphate.. Its function is as follows. DNA repair enzyme involved in the repair of deaminated bases. Selectively cleaves double-stranded DNA at the second phosphodiester bond 3' to a deoxyinosine leaving behind the intact lesion on the nicked DNA. In Bacillus subtilis (strain 168), this protein is Endonuclease V.